The chain runs to 601 residues: NADH-quinone oxidoreductase subunit C/D (601 aa).

An NADH dehydrogenase I subunit C region spans residues 1-191; it reads MKLTREFPSN…DPFMLDAVKQ (191 aa). Residues 215–601 are NADH dehydrogenase I subunit D; it reads DYMFLNLGPN…IDFVMSDVDR (387 aa).

This sequence in the N-terminal section; belongs to the complex I 30 kDa subunit family. The protein in the C-terminal section; belongs to the complex I 49 kDa subunit family. As to quaternary structure, NDH-1 is composed of 13 different subunits. Subunits NuoB, CD, E, F, and G constitute the peripheral sector of the complex.

The protein localises to the cell inner membrane. It catalyses the reaction a quinone + NADH + 5 H(+)(in) = a quinol + NAD(+) + 4 H(+)(out). NDH-1 shuttles electrons from NADH, via FMN and iron-sulfur (Fe-S) centers, to quinones in the respiratory chain. The immediate electron acceptor for the enzyme in this species is believed to be ubiquinone. Couples the redox reaction to proton translocation (for every two electrons transferred, four hydrogen ions are translocated across the cytoplasmic membrane), and thus conserves the redox energy in a proton gradient. This Aeromonas hydrophila subsp. hydrophila (strain ATCC 7966 / DSM 30187 / BCRC 13018 / CCUG 14551 / JCM 1027 / KCTC 2358 / NCIMB 9240 / NCTC 8049) protein is NADH-quinone oxidoreductase subunit C/D.